Consider the following 411-residue polypeptide: MIEVLLVTICLAVFPYQGSSIILESGNVNDYEVVYPRKVSALPKGAVQPKYEDTMQYELKENGEPVVLHLEKNKGLFSEDYSETHYSPDGREITTYPSVEDHCYYHGRIHNDADSTASISACDGLKGYFKLQGQTYLIEPLKLPDSEAHAVFKYENIEKEDEAPKMCGVTQNWESDESIKKASQLYLTPEQQRFPQRYVKLAIVVDYRMYIKYNRDSNKITVRVHEMVNHVNEMYKPLNVAITLSLLRIWSTRDLITVQSDSKVTLGSFGDWRKTVLLKQQSHDCAHLLTDITFTKNVIGVAYKKGMCDPKLSVGLVQDYSSNVFVVAAIMTHELGHNLGMEHDEDENGKKCKCDTCIMSPAISDPPAQLFSDCSKNDYHTFLTNSKPQCILNAPLRTDTVSTPVSGNEPL.

A signal peptide spans 1–20 (MIEVLLVTICLAVFPYQGSS). Positions 21–190 (IILESGNVND…KASQLYLTPE (170 aa)) are excised as a propeptide. Residues 197–395 (RYVKLAIVVD…SKPQCILNAP (199 aa)) form the Peptidase M12B domain. Asp-284 is a Ca(2+) binding site. Disulfide bonds link Cys-308/Cys-390, Cys-352/Cys-374, and Cys-354/Cys-357. His-333 lines the Zn(2+) pocket. Glu-334 is a catalytic residue. His-337 and His-343 together coordinate Zn(2+). Cys-390 and Asn-393 together coordinate Ca(2+). Residues 396 to 411 (LRTDTVSTPVSGNEPL) constitute a propeptide that is removed on maturation.

It belongs to the venom metalloproteinase (M12B) family. P-II subfamily. In terms of assembly, monomer. The cofactor is Zn(2+). As to expression, expressed by the venom gland.

The protein resides in the secreted. In terms of biological role, snake venom metalloproteinase that impairs hemostasis in the envenomed animal. This Protobothrops mucrosquamatus (Taiwan habu) protein is Zinc metalloproteinase/disintegrin.